We begin with the raw amino-acid sequence, 96 residues long: ATP-dependent Clp protease adapter protein ClpS (96 aa).

The protein belongs to the ClpS family. As to quaternary structure, binds to the N-terminal domain of the chaperone ClpA.

Its function is as follows. Involved in the modulation of the specificity of the ClpAP-mediated ATP-dependent protein degradation. In Campylobacter jejuni subsp. jejuni serotype O:6 (strain 81116 / NCTC 11828), this protein is ATP-dependent Clp protease adapter protein ClpS.